A 424-amino-acid chain; its full sequence is MFIDTAKIFVKSGKGGDGSISFRREKYIAFGGPDGGDGGKGGNVVLVVDPNMTTLLDFTYKRKYKAEPGGNGAGSKCFGKNGKDLHIKVPMGTIVKDAETDKIMADLSKPEDSYVVAKGGRGGKGNCRFTTPTRQAPDFAEPGMPEEERWIKLELKLLADVGLIGFPNVGKSTLLSVVSKARPKIANYHFTTLKPNLGVVSIEGVNNFVIADIPGIIEGASEGVGLGLDFLRHVERTRVLIHVIDISSVEGRDPYDDFLKINEELKRYSVKLYDRPQIIAANKSDMLFDEEKFEEFKTKVEKHGYNKVFKISAATKQGVDDLMKEAARLLSTILVTDLEISEEDRFIEEEKRFTYSIRKEDNTYIVEGSFVDRLLNAVNVNDPDDLRYFHKVLKNKGVMEELMEMGIEDGDVVRLNDFEFDFLL.

The Obg domain maps to 1–158; the sequence is MFIDTAKIFV…RWIKLELKLL (158 aa). Positions 159–331 constitute an OBG-type G domain; that stretch reads ADVGLIGFPN…LMKEAARLLS (173 aa). GTP is bound by residues 165-172, 190-194, 212-215, 282-285, and 312-314; these read GFPNVGKS, FTTLK, DIPG, NKSD, and SAA. 2 residues coordinate Mg(2+): serine 172 and threonine 192. Residues 345-424 enclose the OCT domain; the sequence is RFIEEEKRFT…LNDFEFDFLL (80 aa).

The protein belongs to the TRAFAC class OBG-HflX-like GTPase superfamily. OBG GTPase family. Monomer. Requires Mg(2+) as cofactor.

The protein resides in the cytoplasm. Its function is as follows. An essential GTPase which binds GTP, GDP and possibly (p)ppGpp with moderate affinity, with high nucleotide exchange rates and a fairly low GTP hydrolysis rate. Plays a role in control of the cell cycle, stress response, ribosome biogenesis and in those bacteria that undergo differentiation, in morphogenesis control. The chain is GTPase Obg from Clostridium botulinum (strain ATCC 19397 / Type A).